The following is a 327-amino-acid chain: Phenylalanine--tRNA ligase alpha subunit (327 aa).

Glu-252 contacts Mg(2+).

Belongs to the class-II aminoacyl-tRNA synthetase family. Phe-tRNA synthetase alpha subunit type 1 subfamily. In terms of assembly, tetramer of two alpha and two beta subunits. The cofactor is Mg(2+).

It is found in the cytoplasm. It catalyses the reaction tRNA(Phe) + L-phenylalanine + ATP = L-phenylalanyl-tRNA(Phe) + AMP + diphosphate + H(+). In Hamiltonella defensa subsp. Acyrthosiphon pisum (strain 5AT), this protein is Phenylalanine--tRNA ligase alpha subunit.